Reading from the N-terminus, the 227-residue chain is Cytochrome c oxidase subunit 2 (227 aa).

At 1 to 14 the chain is on the mitochondrial intermembrane side; the sequence is MAYPFQLGLQDATS. A helical membrane pass occupies residues 15–45; it reads PIMEELTNFHDHTLMIVFLISSLVLYIISSM. The Mitochondrial matrix portion of the chain corresponds to 46-59; sequence LATKMTHTSTMDAQ. The helical transmembrane segment at 60–87 threads the bilayer; sequence SMETIWTILPAVILVLIALPSLRILYMM. Residues 88–227 lie on the Mitochondrial intermembrane side of the membrane; it reads DEINNPVLTV…FFENWSASMI (140 aa). Residues His161, Cys196, Glu198, Cys200, His204, and Met207 each coordinate Cu cation. A Mg(2+)-binding site is contributed by Glu198.

Belongs to the cytochrome c oxidase subunit 2 family. Component of the cytochrome c oxidase (complex IV, CIV), a multisubunit enzyme composed of 14 subunits. The complex is composed of a catalytic core of 3 subunits MT-CO1, MT-CO2 and MT-CO3, encoded in the mitochondrial DNA, and 11 supernumerary subunits COX4I, COX5A, COX5B, COX6A, COX6B, COX6C, COX7A, COX7B, COX7C, COX8 and NDUFA4, which are encoded in the nuclear genome. The complex exists as a monomer or a dimer and forms supercomplexes (SCs) in the inner mitochondrial membrane with NADH-ubiquinone oxidoreductase (complex I, CI) and ubiquinol-cytochrome c oxidoreductase (cytochrome b-c1 complex, complex III, CIII), resulting in different assemblies (supercomplex SCI(1)III(2)IV(1) and megacomplex MCI(2)III(2)IV(2)). Found in a complex with TMEM177, COA6, COX18, COX20, SCO1 and SCO2. Interacts with TMEM177 in a COX20-dependent manner. Interacts with COX20. Interacts with COX16. Cu cation serves as cofactor.

It is found in the mitochondrion inner membrane. It catalyses the reaction 4 Fe(II)-[cytochrome c] + O2 + 8 H(+)(in) = 4 Fe(III)-[cytochrome c] + 2 H2O + 4 H(+)(out). Component of the cytochrome c oxidase, the last enzyme in the mitochondrial electron transport chain which drives oxidative phosphorylation. The respiratory chain contains 3 multisubunit complexes succinate dehydrogenase (complex II, CII), ubiquinol-cytochrome c oxidoreductase (cytochrome b-c1 complex, complex III, CIII) and cytochrome c oxidase (complex IV, CIV), that cooperate to transfer electrons derived from NADH and succinate to molecular oxygen, creating an electrochemical gradient over the inner membrane that drives transmembrane transport and the ATP synthase. Cytochrome c oxidase is the component of the respiratory chain that catalyzes the reduction of oxygen to water. Electrons originating from reduced cytochrome c in the intermembrane space (IMS) are transferred via the dinuclear copper A center (CU(A)) of subunit 2 and heme A of subunit 1 to the active site in subunit 1, a binuclear center (BNC) formed by heme A3 and copper B (CU(B)). The BNC reduces molecular oxygen to 2 water molecules using 4 electrons from cytochrome c in the IMS and 4 protons from the mitochondrial matrix. This is Cytochrome c oxidase subunit 2 (MT-CO2) from Acomys wilsoni (Wilson's spiny mouse).